The following is a 275-amino-acid chain: Translation initiation factor 2 subunit alpha (275 aa).

Residues 12–83 (GEFVVATVKN…EKGHIDLSLK (72 aa)) enclose the S1 motif domain.

The protein belongs to the eIF-2-alpha family. Heterotrimer composed of an alpha, a beta and a gamma chain.

In terms of biological role, eIF-2 functions in the early steps of protein synthesis by forming a ternary complex with GTP and initiator tRNA. This chain is Translation initiation factor 2 subunit alpha, found in Thermococcus kodakarensis (strain ATCC BAA-918 / JCM 12380 / KOD1) (Pyrococcus kodakaraensis (strain KOD1)).